The sequence spans 301 residues: Protein FdhE homolog (301 aa).

The protein belongs to the FdhE family.

It localises to the cytoplasm. In terms of biological role, necessary for formate dehydrogenase activity. The polypeptide is Protein FdhE homolog (Shewanella baltica (strain OS223)).